We begin with the raw amino-acid sequence, 148 residues long: uncharacterized protein (148 aa).

Helical transmembrane passes span 16–36 (IVGAVIFSMSIIVILYISIIL) and 41–61 (LSFSIILAVDILIIALFAYIF).

It to M.jannaschii MJ0696.

The protein localises to the cell membrane. This is an uncharacterized protein from Methanocaldococcus jannaschii (strain ATCC 43067 / DSM 2661 / JAL-1 / JCM 10045 / NBRC 100440) (Methanococcus jannaschii).